The following is a 456-amino-acid chain: Bifunctional protein GlmU (456 aa).

The segment at 1-229 is pyrophosphorylase; sequence MYKCALILAA…FEEILGVNSR (229 aa). UDP-N-acetyl-alpha-D-glucosamine contacts are provided by residues 8 to 11, K22, Q73, and 78 to 79; these read LAAG and GT. Mg(2+) is bound at residue D103. Positions 140, 155, 170, and 227 each coordinate UDP-N-acetyl-alpha-D-glucosamine. N227 is a binding site for Mg(2+). Residues 230 to 250 are linker; the sequence is LQLCQVGKVMQKRINEKHMEN. The tract at residues 251 to 456 is N-acetyltransferase; sequence GSTLIDPDNT…GWVDKKGLLK (206 aa). Residues R332 and K350 each coordinate UDP-N-acetyl-alpha-D-glucosamine. H362 serves as the catalytic Proton acceptor. Y365 and N376 together coordinate UDP-N-acetyl-alpha-D-glucosamine. Residues 385–386, A422, and R439 contribute to the acetyl-CoA site; that span reads NY.

The protein in the N-terminal section; belongs to the N-acetylglucosamine-1-phosphate uridyltransferase family. This sequence in the C-terminal section; belongs to the transferase hexapeptide repeat family. In terms of assembly, homotrimer. Requires Mg(2+) as cofactor.

It localises to the cytoplasm. The catalysed reaction is alpha-D-glucosamine 1-phosphate + acetyl-CoA = N-acetyl-alpha-D-glucosamine 1-phosphate + CoA + H(+). The enzyme catalyses N-acetyl-alpha-D-glucosamine 1-phosphate + UTP + H(+) = UDP-N-acetyl-alpha-D-glucosamine + diphosphate. It participates in nucleotide-sugar biosynthesis; UDP-N-acetyl-alpha-D-glucosamine biosynthesis; N-acetyl-alpha-D-glucosamine 1-phosphate from alpha-D-glucosamine 6-phosphate (route II): step 2/2. The protein operates within nucleotide-sugar biosynthesis; UDP-N-acetyl-alpha-D-glucosamine biosynthesis; UDP-N-acetyl-alpha-D-glucosamine from N-acetyl-alpha-D-glucosamine 1-phosphate: step 1/1. It functions in the pathway bacterial outer membrane biogenesis; LPS lipid A biosynthesis. Its function is as follows. Catalyzes the last two sequential reactions in the de novo biosynthetic pathway for UDP-N-acetylglucosamine (UDP-GlcNAc). The C-terminal domain catalyzes the transfer of acetyl group from acetyl coenzyme A to glucosamine-1-phosphate (GlcN-1-P) to produce N-acetylglucosamine-1-phosphate (GlcNAc-1-P), which is converted into UDP-GlcNAc by the transfer of uridine 5-monophosphate (from uridine 5-triphosphate), a reaction catalyzed by the N-terminal domain. The sequence is that of Bifunctional protein GlmU from Clostridium acetobutylicum (strain ATCC 824 / DSM 792 / JCM 1419 / IAM 19013 / LMG 5710 / NBRC 13948 / NRRL B-527 / VKM B-1787 / 2291 / W).